Consider the following 464-residue polypeptide: Protein FAM90A14 (464 aa).

Disordered regions lie at residues 1–42 (MMAR…DPRL), 70–389 (PATL…HDGA), and 411–437 (APSF…SEAP). Composition is skewed to basic and acidic residues over residues 74-89 (GKKE…KPRV) and 97-114 (NKDK…DPQR). Residues 180–197 (LASLSPLRKASLSSSSSL) show a composition bias toward low complexity.

This sequence belongs to the FAM90 family.

The sequence is that of Protein FAM90A14 from Homo sapiens (Human).